The following is a 408-amino-acid chain: NFATC2-interacting protein (408 aa).

A disordered region spans residues 1-113 (MAEPVGKRGR…LDPGEAPLVP (113 aa)). The segment covering 24 to 40 (QRSPSRGTLDVVSVDLV) has biased composition (low complexity). A phosphoserine mark is found at serine 41, serine 43, serine 73, serine 77, serine 79, serine 81, and serine 116. Residues lysine 118 and lysine 120 each participate in a glycyl lysine isopeptide (Lys-Gly) (interchain with G-Cter in SUMO2) cross-link. The tract at residues 141–205 (EEEVELADSS…TKSRKHTRAL (65 aa)) is disordered. Residues 169 to 181 (RTKDKEEKKKTEI) show a composition bias toward basic and acidic residues. Phosphoserine is present on residues serine 187, serine 190, and serine 193. Positions 196-205 (TKSRKHTRAL) are enriched in basic residues. A coiled-coil region spans residues 197–220 (KSRKHTRALKKLSEVNKRLQDLRS). 2 positions are modified to phosphoserine: serine 209 and serine 303. Phosphothreonine is present on residues threonine 305 and threonine 307. One can recognise a Ubiquitin-like domain in the interval 337–408 (LQLRVQGKEK…ESGDLIEVWG (72 aa)). 2 positions are modified to phosphoserine: serine 358 and serine 379.

Interacts with NFATC2, TRAF1, TRAF2 and PRMT1. Interacts with UBE2I/UBC9. Methylation at the N-terminus by PRMT1 modulates interaction with the NFAT complex and results in augmented cytokine production.

It localises to the nucleus. Its subcellular location is the cytoplasm. In terms of biological role, in T-helper 2 (Th2) cells, regulates the magnitude of NFAT-driven transcription of a specific subset of cytokine genes, including IL3, IL4, IL5 and IL13, but not IL2. Recruits PRMT1 to the IL4 promoter; this leads to enhancement of histone H4 'Arg-3'-methylation and facilitates subsequent histone acetylation at the IL4 locus, thus promotes robust cytokine expression. Down-regulates formation of poly-SUMO chains by UBE2I/UBC9. The polypeptide is NFATC2-interacting protein (NFATC2IP) (Macaca fascicularis (Crab-eating macaque)).